Here is a 124-residue protein sequence, read N- to C-terminus: UPF0482 protein YpsIP31758_1865 (124 aa).

A signal peptide spans 1 to 32 (MMKINNLPRLIRTFLPATLLMLPLVWQTPALA). Residues 47-68 (GGNNDPMSKEQARQSQQQWDET) are disordered.

The protein belongs to the UPF0482 family.

The chain is UPF0482 protein YpsIP31758_1865 from Yersinia pseudotuberculosis serotype O:1b (strain IP 31758).